The sequence spans 869 residues: 1-phosphatidylinositol 4,5-bisphosphate phosphodiesterase 1 (869 aa).

The region spanning 269-304 is the EF-hand domain; that stretch reads VSTGQLLEFFQLADINHNGLLNYFEFEKFIKILKNR. Residues aspartate 282, asparagine 284, asparagine 286, and glutamate 293 each coordinate Ca(2+). A PI-PLC X-box domain is found at 382 to 520; sequence YSKPLNHYFI…LKHKILLKSK (139 aa). Catalysis depends on residues histidine 395 and histidine 439. Substrate contacts are provided by lysine 518 and lysine 520. The segment at 546–571 is disordered; that stretch reads ANEQELRMKDDSTNSSSATNSSSMQR. Residues 558 to 568 are compositionally biased toward low complexity; that stretch reads TNSSSATNSSS. The 120-residue stretch at 590–709 folds into the PI-PLC Y-box domain; that stretch reads ISGIHGIKFR…SGYVLKPKKL (120 aa). Substrate-binding residues include serine 614 and arginine 643. The C2 domain maps to 713–862; it reads VTKAKMIPLI…EGEQYIFCTL (150 aa).

In terms of assembly, interacts with SGD1. The cofactor is Ca(2+).

The catalysed reaction is a 1,2-diacyl-sn-glycero-3-phospho-(1D-myo-inositol-4,5-bisphosphate) + H2O = 1D-myo-inositol 1,4,5-trisphosphate + a 1,2-diacyl-sn-glycerol + H(+). Functionally, the production of the second messenger molecules diacylglycerol (DAG) and inositol 1,4,5-trisphosphate (IP3) is mediated by activated phosphatidylinositol-specific phospholipase C enzymes. Required for cell growth, osmoresistance and expression of GPD1. In Saccharomyces cerevisiae (strain ATCC 204508 / S288c) (Baker's yeast), this protein is 1-phosphatidylinositol 4,5-bisphosphate phosphodiesterase 1 (PLC1).